The primary structure comprises 533 residues: NAD(P)H-quinone oxidoreductase chain 4 (533 aa).

Transmembrane regions (helical) follow at residues 5 to 25 (VPWL…VPLV), 36 to 56 (WYAL…YLTG), 70 to 90 (VSWL…LSMP), 91 to 111 (LILL…PVSF), 115 to 135 (LFYF…AVQD), 137 to 157 (LLFF…LAIW), 169 to 189 (FILY…AMGF), 210 to 230 (GFQL…LPIV), 244 to 264 (TAPV…YALL), 278 to 298 (FAPL…LTSF), 315 to 335 (MGFV…GAML), 336 to 356 (QMIS…ATYD), 377 to 397 (FALW…SGFV), 418 to 438 (VVIC…LLSM), and 465 to 485 (VYII…PKLM).

Belongs to the complex I subunit 4 family.

The protein localises to the cellular thylakoid membrane. The enzyme catalyses a plastoquinone + NADH + (n+1) H(+)(in) = a plastoquinol + NAD(+) + n H(+)(out). It catalyses the reaction a plastoquinone + NADPH + (n+1) H(+)(in) = a plastoquinol + NADP(+) + n H(+)(out). NDH-1 shuttles electrons from NAD(P)H, via FMN and iron-sulfur (Fe-S) centers, to quinones in the respiratory chain. The immediate electron acceptor for the enzyme in this species is believed to be plastoquinone. Couples the redox reaction to proton translocation (for every two electrons transferred, four hydrogen ions are translocated across the cytoplasmic membrane), and thus conserves the redox energy in a proton gradient. In Synechococcus sp. (strain CC9605), this protein is NAD(P)H-quinone oxidoreductase chain 4.